A 191-amino-acid chain; its full sequence is Classical arabinogalactan protein 9 (191 aa).

Positions 1 to 20 are cleaved as a signal peptide; the sequence is MARSFAIAVICIVLIAGVTG. Residues 20–172 are disordered; sequence GQAPTSPPTA…SPTDVNDQNG (153 aa). The residue at position 21 (Gln-21) is a Pyrrolidone carboxylic acid. 4-hydroxyproline occurs at positions 23, 26, 27, 31, and 33. Residues 24–146 show a composition bias toward pro residues; it reads TSPPTATPAP…PSPSSSPPLP (123 aa). Residues Pro-26, Pro-27, Pro-31, and Pro-33 are each glycosylated (O-linked (Ara...) hydroxyproline). The segment covering 155–172 has biased composition (polar residues); that stretch reads TDSISPAPSPTDVNDQNG. A lipid anchor (GPI-anchor amidated glycine) is attached at Gly-172. The propeptide at 173–191 is removed in mature form; it reads ASKMVSSLVFGSVLVWFMI.

It belongs to the classical AGP family. O-glycosylated on hydroxyprolines; noncontiguous hydroxylproline residues are glycosylated with arabinogalactan. As to expression, predominantly expressed in flowers and at a lower level in leaves and siliques.

The protein resides in the cell membrane. Functionally, proteoglycan that seems to be implicated in diverse developmental roles such as differentiation, cell-cell recognition, embryogenesis and programmed cell death. The polypeptide is Classical arabinogalactan protein 9 (AGP9) (Arabidopsis thaliana (Mouse-ear cress)).